The following is a 496-amino-acid chain: Sporulation-killing factor biosynthesis protein SkfC (496 aa).

7 consecutive transmembrane segments (helical) span residues Met1 to Ile21, Val224 to Met244, Thr248 to Leu268, Leu291 to Cys311, Ile331 to Leu351, Leu399 to Ser419, and Phe443 to Val463.

It localises to the membrane. Required for production of the bacteriocin SkfA. In Bacillus subtilis (strain 168), this protein is Sporulation-killing factor biosynthesis protein SkfC.